Here is a 60-residue protein sequence, read N- to C-terminus: Myrmicitoxin(1)-Pr4c (60 aa).

Residues 1–23 (MKAIIFLFAVLTVVAIIIPIISG) form the signal peptide. Positions 24–33 (EPNAGPHAAS) are excised as a propeptide. Q59 carries the post-translational modification Glutamine amide.

This sequence belongs to the formicidae venom clade 2 family. Expressed by the venom gland.

It is found in the secreted. Functionally, toxin that causes a rapid and irreversible paralysis when intrathoracically injected into insects (blowflies). Does not cause spontaneous nocifensive behaviors by intraplantar injection in mice. This is Myrmicitoxin(1)-Pr4c from Pogonomyrmex rugosus (Desert harvester ant).